A 96-amino-acid chain; its full sequence is Small ribosomal subunit protein bS20 (96 aa).

This sequence belongs to the bacterial ribosomal protein bS20 family.

In terms of biological role, binds directly to 16S ribosomal RNA. In Thermotoga petrophila (strain ATCC BAA-488 / DSM 13995 / JCM 10881 / RKU-1), this protein is Small ribosomal subunit protein bS20.